The chain runs to 22 residues: Cytin chain B (22 aa).

Belongs to the protease inhibitor I13 (potato type I serine protease inhibitor) family. Heterodimer of an A chain and a B chain, linked by a disulfide bond.

Functionally, inhibitor of chymotrypsin. The protein is Cytin chain B of Theromyzon tessulatum (Duck leech).